Here is a 253-residue protein sequence, read N- to C-terminus: Demethylmenaquinone methyltransferase (253 aa).

Residues Thr-75, Asp-96, and 124–125 (DA) contribute to the S-adenosyl-L-methionine site.

The protein belongs to the class I-like SAM-binding methyltransferase superfamily. MenG/UbiE family.

It catalyses the reaction a 2-demethylmenaquinol + S-adenosyl-L-methionine = a menaquinol + S-adenosyl-L-homocysteine + H(+). The protein operates within quinol/quinone metabolism; menaquinone biosynthesis; menaquinol from 1,4-dihydroxy-2-naphthoate: step 2/2. Functionally, methyltransferase required for the conversion of demethylmenaquinol (DMKH2) to menaquinol (MKH2). This Desulfitobacterium hafniense (strain Y51) protein is Demethylmenaquinone methyltransferase.